We begin with the raw amino-acid sequence, 218 residues long: Ribose-5-phosphate isomerase A (218 aa).

Substrate-binding positions include 27 to 30 (TGST), 80 to 83 (DGAD), and 93 to 96 (KGGG). Residue Glu-102 is the Proton acceptor of the active site. Lys-120 serves as a coordination point for substrate.

The protein belongs to the ribose 5-phosphate isomerase family. In terms of assembly, homodimer.

It carries out the reaction aldehydo-D-ribose 5-phosphate = D-ribulose 5-phosphate. It participates in carbohydrate degradation; pentose phosphate pathway; D-ribose 5-phosphate from D-ribulose 5-phosphate (non-oxidative stage): step 1/1. In terms of biological role, catalyzes the reversible conversion of ribose-5-phosphate to ribulose 5-phosphate. This is Ribose-5-phosphate isomerase A from Picrophilus torridus (strain ATCC 700027 / DSM 9790 / JCM 10055 / NBRC 100828 / KAW 2/3).